Here is an 84-residue protein sequence, read N- to C-terminus: Small ribosomal subunit protein bS18B (84 aa).

Residues 1-10 (MAVKRAPSKK) show a composition bias toward basic residues. Residues 1 to 20 (MAVKRAPSKKVRAEQARRPK) form a disordered region.

Belongs to the bacterial ribosomal protein bS18 family. As to quaternary structure, part of the 30S ribosomal subunit. Forms a tight heterodimer with protein bS6.

In terms of biological role, binds as a heterodimer with protein bS6 to the central domain of the 16S rRNA, where it helps stabilize the platform of the 30S subunit. The chain is Small ribosomal subunit protein bS18B from Nocardia farcinica (strain IFM 10152).